The sequence spans 127 residues: MRHQKSGRKFNRTSAHREAMFRNMAASLFKHELIKTTLPKAKELRRVAEPLITIGKVDGVANRRLAFARLRDKEAVGKLFVELGSRYATRPGGYLRILKAGFRAGDNAPMAYVELVDRPVVAEEVAE.

The protein belongs to the bacterial ribosomal protein bL17 family. Part of the 50S ribosomal subunit. Contacts protein L32.

The protein is Large ribosomal subunit protein bL17 of Xanthomonas oryzae pv. oryzae (strain KACC10331 / KXO85).